Reading from the N-terminus, the 198-residue chain is Protein C4 (198 aa).

The segment at 1 to 36 is disordered; the sequence is MFNPRHPGGEFFGRKHHRRHAPDGRSSSSSSSSSEC.

The protein is Protein C4 (C4) of Giardia intestinalis (Giardia lamblia).